The sequence spans 635 residues: DNA primase (635 aa).

Residues 41–65 (CPFHDEKSPSFSVSPAKQMYYCFGC) form a CHC2-type zinc finger. Positions 265 to 348 (DEAILVEGYF…SGQVNLRILN (84 aa)) constitute a Toprim domain. Mg(2+)-binding residues include Glu-271, Asp-317, and Asp-319.

It belongs to the DnaG primase family. Monomer. Interacts with DnaB. Zn(2+) serves as cofactor. Requires Mg(2+) as cofactor.

The catalysed reaction is ssDNA + n NTP = ssDNA/pppN(pN)n-1 hybrid + (n-1) diphosphate.. In terms of biological role, RNA polymerase that catalyzes the synthesis of short RNA molecules used as primers for DNA polymerase during DNA replication. This Synechocystis sp. (strain ATCC 27184 / PCC 6803 / Kazusa) protein is DNA primase.